The following is a 284-amino-acid chain: Elongation factor Ts (284 aa).

The involved in Mg(2+) ion dislocation from EF-Tu stretch occupies residues 80-83 (TDFV).

Belongs to the EF-Ts family.

Its subcellular location is the cytoplasm. In terms of biological role, associates with the EF-Tu.GDP complex and induces the exchange of GDP to GTP. It remains bound to the aminoacyl-tRNA.EF-Tu.GTP complex up to the GTP hydrolysis stage on the ribosome. This chain is Elongation factor Ts, found in Neisseria meningitidis serogroup C (strain 053442).